Here is a 483-residue protein sequence, read N- to C-terminus: Altronate oxidoreductase (483 aa).

Ile-18–Ala-29 is an NAD(+) binding site.

It belongs to the mannitol dehydrogenase family. UxaB subfamily.

The catalysed reaction is D-altronate + NAD(+) = keto-D-tagaturonate + NADH + H(+). The protein operates within carbohydrate metabolism; pentose and glucuronate interconversion. The polypeptide is Altronate oxidoreductase (Cronobacter sakazakii (strain ATCC BAA-894) (Enterobacter sakazakii)).